A 563-amino-acid chain; its full sequence is Arginine--tRNA ligase (563 aa).

The 'HIGH' region motif lies at 121 to 131 (PNIAKPFSIGH).

Belongs to the class-I aminoacyl-tRNA synthetase family. As to quaternary structure, monomer.

The protein localises to the cytoplasm. It catalyses the reaction tRNA(Arg) + L-arginine + ATP = L-arginyl-tRNA(Arg) + AMP + diphosphate. The protein is Arginine--tRNA ligase of Streptococcus pyogenes serotype M12 (strain MGAS2096).